The chain runs to 181 residues: Acetylcholinesterase (181 aa).

Ser-76 acts as the Acyl-ester intermediate in catalysis. Catalysis depends on Glu-132, which acts as the Charge relay system. Positions Trp-162–Asn-181 are disordered.

Belongs to the type-B carboxylesterase/lipase family. In terms of processing, the N-terminus is blocked. As to expression, expressed by the venom gland. Is also probably expressed by liver and muscle.

The protein localises to the synapse. Its subcellular location is the secreted. It localises to the cell membrane. It carries out the reaction acetylcholine + H2O = choline + acetate + H(+). In venom, its toxic role is unclear: it could result in less musculatory control by rapidly hydrolyzing acetylcholine, or that it works synergistically with alkaline phosphatase (ALP) in paralyzing prey through hypotension. In muscle, it terminates signal transduction at the neuromuscular junction by rapid hydrolysis of the acetylcholine released into the synaptic cleft. In liver, its function is unclear: it could serve as a safeguard against any diffusion of acetylcholine from synapses into the circulation. The polypeptide is Acetylcholinesterase (ACHE) (Naja oxiana (Central Asian cobra)).